A 184-amino-acid chain; its full sequence is MAAAMMNKTIVVSKDGCARSSSIPKVATNKMGFASAVAMKKSREMMVWQPFNNKMFETFSYLPPLTDEQISKQVDYILANSWTPCLEFAASDQAYAGNENCIRMGPVASTYQDNRYWTMWKLPMFGCTDGSQVLSEIQACTKAFPDAYIRLVCFDANRQVQISGFLVHRPPTATDYRLPADRQV.

Residues 1–43 (MAAAMMNKTIVVSKDGCARSSSIPKVATNKMGFASAVAMKKSR) constitute a chloroplast transit peptide.

The protein belongs to the RuBisCO small chain family. Heterohexadecamer of 8 large and 8 small subunits.

It localises to the plastid. Its subcellular location is the chloroplast. Its function is as follows. RuBisCO catalyzes two reactions: the carboxylation of D-ribulose 1,5-bisphosphate, the primary event in carbon dioxide fixation, as well as the oxidative fragmentation of the pentose substrate. Both reactions occur simultaneously and in competition at the same active site. Although the small subunit is not catalytic it is essential for maximal activity. This Acetabularia peniculus (Green alga) protein is Ribulose bisphosphate carboxylase small subunit, chloroplastic 5.